A 97-amino-acid polypeptide reads, in one-letter code: Prophage lipoprotein Bor homolog (97 aa).

The signal sequence occupies residues 1–16 (MKKMLLATALALLITG). Cysteine 17 is lipidated: N-palmitoyl cysteine. Cysteine 17 is lipidated: S-diacylglycerol cysteine.

Belongs to the lambda phage bor family.

It localises to the cell membrane. The polypeptide is Prophage lipoprotein Bor homolog (borD) (Escherichia coli (strain K12)).